Reading from the N-terminus, the 172-residue chain is MSDQQQQQPGQDGQPFFNIQRVYLKDLSLEQPNSPHIFLEQEQPSVEVQVDVAASQLAEGVFEVTVIGTVTTKVQEKVAFLVEAKQAGIFDIRNVPAEQMDPLLGIACPTIVYPYLRSNIADTIGRAGFQPIHLAEINFQALYEQRLAAAMEQQGQAGGTGLVMPDGSKATH.

This sequence belongs to the SecB family. Homotetramer, a dimer of dimers. One homotetramer interacts with 1 SecA dimer.

Its subcellular location is the cytoplasm. Functionally, one of the proteins required for the normal export of preproteins out of the cell cytoplasm. It is a molecular chaperone that binds to a subset of precursor proteins, maintaining them in a translocation-competent state. It also specifically binds to its receptor SecA. This Ralstonia pickettii (strain 12J) protein is Protein-export protein SecB.